The primary structure comprises 135 residues: Ribonuclease VapC35 (135 aa).

Residues 2–123 enclose the PINc domain; it reads IYLETSALVK…DNRLKEAAEA (122 aa). Mg(2+)-binding residues include Glu-5 and Asp-91.

Belongs to the PINc/VapC protein family. The cofactor is Mg(2+).

In terms of biological role, toxic component of a type II toxin-antitoxin (TA) system. An RNase. Its toxic effect is neutralized by coexpression with cognate antitoxin VapB35. In Mycobacterium tuberculosis (strain CDC 1551 / Oshkosh), this protein is Ribonuclease VapC35.